The sequence spans 228 residues: DNA-binding response regulator MtrA (228 aa).

Positions 7–120 constitute a Response regulatory domain; it reads RILVVDDDAS…ELVARVRARL (114 aa). Residue Asp56 is modified to 4-aspartylphosphate. Residues 128-227 constitute a DNA-binding region (ompR/PhoB-type); sequence AEMLSIADVE…VRGVGYKAGP (100 aa).

Post-translationally, phosphorylated by MtrB.

Member of the two-component regulatory system MtrA/MtrB. The chain is DNA-binding response regulator MtrA (mtrA) from Mycobacterium bovis (strain ATCC BAA-935 / AF2122/97).